We begin with the raw amino-acid sequence, 118 residues long: Large ribosomal subunit protein bL20 (118 aa).

It belongs to the bacterial ribosomal protein bL20 family.

Binds directly to 23S ribosomal RNA and is necessary for the in vitro assembly process of the 50S ribosomal subunit. It is not involved in the protein synthesizing functions of that subunit. The sequence is that of Large ribosomal subunit protein bL20 from Hamiltonella defensa subsp. Acyrthosiphon pisum (strain 5AT).